We begin with the raw amino-acid sequence, 345 residues long: Acetylserotonin O-methyltransferase (345 aa).

S-adenosyl-L-methionine contacts are provided by residues Y147, W164, D210, 235-237 (GDF), and R252. The Proton donor/acceptor role is filled by H255. 3 residues coordinate substrate: D256, N302, and Q306.

This sequence belongs to the class I-like SAM-binding methyltransferase superfamily. Cation-independent O-methyltransferase family. As to quaternary structure, homodimer. Expressed in the pineal gland (at protein level). In the retina, very low expression is found at the mRNA level, and not at the protein level.

It catalyses the reaction N-acetylserotonin + S-adenosyl-L-methionine = melatonin + S-adenosyl-L-homocysteine + H(+). It participates in aromatic compound metabolism; melatonin biosynthesis; melatonin from serotonin: step 1/2. Functionally, catalyzes the transfer of a methyl group onto N-acetylserotonin, producing melatonin (N-acetyl-5-methoxytryptamine). Does not show Acetylserotonin O-methyltransferase activity. This Homo sapiens (Human) protein is Acetylserotonin O-methyltransferase (ASMT).